The chain runs to 779 residues: Lon protease (779 aa).

In terms of domain architecture, Lon N-terminal spans Leu10–Arg203. Gly355–Thr362 lines the ATP pocket. The Lon proteolytic domain occupies Lys591–Lys772. Residues Ser678 and Lys721 contribute to the active site.

It belongs to the peptidase S16 family. In terms of assembly, homohexamer. Organized in a ring with a central cavity.

The protein resides in the cytoplasm. It catalyses the reaction Hydrolysis of proteins in presence of ATP.. Functionally, ATP-dependent serine protease that mediates the selective degradation of mutant and abnormal proteins as well as certain short-lived regulatory proteins. Required for cellular homeostasis and for survival from DNA damage and developmental changes induced by stress. Degrades polypeptides processively to yield small peptide fragments that are 5 to 10 amino acids long. Binds to DNA in a double-stranded, site-specific manner. The protein is Lon protease of Brevibacillus choshinensis.